The sequence spans 363 residues: Peptide chain release factor 2 (363 aa).

N5-methylglutamine is present on Gln-251.

This sequence belongs to the prokaryotic/mitochondrial release factor family. Methylated by PrmC. Methylation increases the termination efficiency of RF2.

Its subcellular location is the cytoplasm. Peptide chain release factor 2 directs the termination of translation in response to the peptide chain termination codons UGA and UAA. The sequence is that of Peptide chain release factor 2 from Helicobacter acinonychis (strain Sheeba).